The primary structure comprises 166 residues: Small ribosomal subunit protein uS5 (166 aa).

An S5 DRBM domain is found at 11–74 (LNEKLIAVNR…EKARRNMFTI (64 aa)).

This sequence belongs to the universal ribosomal protein uS5 family. Part of the 30S ribosomal subunit. Contacts proteins S4 and S8.

Functionally, with S4 and S12 plays an important role in translational accuracy. Its function is as follows. Located at the back of the 30S subunit body where it stabilizes the conformation of the head with respect to the body. This is Small ribosomal subunit protein uS5 from Aliivibrio salmonicida (strain LFI1238) (Vibrio salmonicida (strain LFI1238)).